A 264-amino-acid polypeptide reads, in one-letter code: Ribosomal protein L11 methyltransferase (264 aa).

Thr116, Gly137, Asp159, and Asn200 together coordinate S-adenosyl-L-methionine.

The protein belongs to the methyltransferase superfamily. PrmA family.

It is found in the cytoplasm. The catalysed reaction is L-lysyl-[protein] + 3 S-adenosyl-L-methionine = N(6),N(6),N(6)-trimethyl-L-lysyl-[protein] + 3 S-adenosyl-L-homocysteine + 3 H(+). In terms of biological role, methylates ribosomal protein L11. This chain is Ribosomal protein L11 methyltransferase, found in Thermotoga petrophila (strain ATCC BAA-488 / DSM 13995 / JCM 10881 / RKU-1).